A 456-amino-acid polypeptide reads, in one-letter code: Shootin-1 (456 aa).

Met-1 carries the N-acetylmethionine modification. Phosphoserine is present on residues Ser-3 and Ser-4. A coiled-coil region spans residues 7-353; that stretch reads EKQLQLITSL…RVNQSENSVP (347 aa). Phosphoserine; by PAK1 is present on residues Ser-101 and Ser-249. Disordered stretches follow at residues 343 to 405 and 418 to 445; these read KRVN…VTDL and KKGV…CESA. Pro residues predominate over residues 352–369; it reads VPPPPPPPPPLPPPPPNP. The residue at position 375 (Ser-375) is a Phosphoserine.

It belongs to the shootin family. Interacts with L1CAM; this interaction occurs in axonal growth cones. Interacts with actin filament retrograde flow; this interaction is enhanced in a netrin-1- and PAK1-dependent manner and promotes F-actin-substrate coupling and concomitant formation of traction forces at axonal growth cones. Interacts with RUFY3. Interacts with PFN2. Interacts (via N-terminus) with KIF20B; this interaction is direct and promotes the association of SHTN1 to microtubules in primary neurons. Associates with microtubule. In terms of processing, phosphorylated on Ser-101 and Ser-249 by PAK1 through a CDC42- and RAC1-dependent signaling pathway, which enhances its association with F-actin retrograde flow in filopodia and lamellipodia of axonal growth cones. Phosphorylation on Ser-101 and Ser-249 is increased by netrin-1.

The protein resides in the perikaryon. The protein localises to the cell projection. It localises to the axon. It is found in the growth cone. Its subcellular location is the cytoplasm. The protein resides in the cytoskeleton. The protein localises to the filopodium. It localises to the lamellipodium. Functionally, involved in the generation of internal asymmetric signals required for neuronal polarization and neurite outgrowth. Mediates netrin-1-induced F-actin-substrate coupling or 'clutch engagement' within the axon growth cone through activation of CDC42, RAC1 and PAK1-dependent signaling pathway, thereby converting the F-actin retrograde flow into traction forces, concomitantly with filopodium extension and axon outgrowth. Plays a role in cytoskeletal organization by regulating the subcellular localization of phosphoinositide 3-kinase (PI3K) activity at the axonal growth cone. Also plays a role in regenerative neurite outgrowth. In the developing cortex, cooperates with KIF20B to promote both the transition from the multipolar to the bipolar stage and the radial migration of cortical neurons from the ventricular zone toward the superficial layer of the neocortex. Involved in the accumulation of phosphatidylinositol 3,4,5-trisphosphate (PIP3) in the growth cone of primary hippocampal neurons. This Pongo abelii (Sumatran orangutan) protein is Shootin-1.